The following is a 361-amino-acid chain: Uroporphyrinogen decarboxylase (361 aa).

Substrate contacts are provided by residues 27–31 (RQAGR), Asp77, Tyr154, Thr209, and His327.

It belongs to the uroporphyrinogen decarboxylase family. As to quaternary structure, homodimer.

The protein localises to the cytoplasm. The catalysed reaction is uroporphyrinogen III + 4 H(+) = coproporphyrinogen III + 4 CO2. It functions in the pathway porphyrin-containing compound metabolism; protoporphyrin-IX biosynthesis; coproporphyrinogen-III from 5-aminolevulinate: step 4/4. Functionally, catalyzes the decarboxylation of four acetate groups of uroporphyrinogen-III to yield coproporphyrinogen-III. The sequence is that of Uroporphyrinogen decarboxylase from Coxiella burnetii (strain RSA 331 / Henzerling II).